Consider the following 376-residue polypeptide: E3 ubiquitin-protein ligase RNF34 (376 aa).

Residues 56–107 form an FYVE-type zinc finger; it reads EGPNIVCKACGLSFSVFRKKHVCCDCKKDFCSLCSVSQENLRRCSTCHLLQE. The region spanning 115–134 is the SAP 1 domain; sequence LMRLKVKDLRQYLLLRNIPT. Serine 169 is subject to Phosphoserine. The interval 216-256 is disordered; that stretch reads IASANTDDDDDDDDDDDDDEDDDDEQEEEEQNPGLSKKKAR. Residues 221 to 246 show a composition bias toward acidic residues; the sequence is TDDDDDDDDDDDDDEDDDDEQEEEEQ. Phosphoserine occurs at positions 258 and 260. In terms of domain architecture, SAP 2 spans 268–282; the sequence is VEGMSVRQLKEILAR. Residues 329–364 form an RING-type zinc finger; that stretch reads CRICMDAVIDCVLLECGHMVTCTKCGKRMSECPICR.

In terms of assembly, interacts with CASP8 and CASP10. Interacts with p53/TP53; involved in p53/TP53 ubiquitination. Interacts (via RING-type zinc finger) with MDM2; the interaction stabilizes MDM2. Interacts (via RING-type zinc finger) with PPARGC1A. Interacts with NOD1. Post-translationally, autoubiquitinated (in vitro). Proteolytically cleaved by caspases upon induction of apoptosis by TNF.

The protein localises to the cell membrane. It localises to the endomembrane system. It is found in the nucleus. Its subcellular location is the nucleus speckle. The protein resides in the cytoplasm. The protein localises to the cytosol. The catalysed reaction is S-ubiquitinyl-[E2 ubiquitin-conjugating enzyme]-L-cysteine + [acceptor protein]-L-lysine = [E2 ubiquitin-conjugating enzyme]-L-cysteine + N(6)-ubiquitinyl-[acceptor protein]-L-lysine.. It participates in protein modification; protein ubiquitination. Functionally, E3 ubiquitin-protein ligase that regulates several biological processes through the ubiquitin-mediated proteasomal degradation of various target proteins. Ubiquitinates the caspases CASP8 and CASP10, promoting their proteasomal degradation, to negatively regulate cell death downstream of death domain receptors in the extrinsic pathway of apoptosis. May mediate 'Lys-48'-linked polyubiquitination of RIPK1 and its subsequent proteasomal degradation thereby indirectly regulating the tumor necrosis factor-mediated signaling pathway. Negatively regulates p53/TP53 through its direct ubiquitination and targeting to proteasomal degradation. Indirectly, may also negatively regulate p53/TP53 through ubiquitination and degradation of SFN. Mediates PPARGC1A proteasomal degradation probably through ubiquitination thereby indirectly regulating the metabolism of brown fat cells. Possibly involved in innate immunity, through 'Lys-48'-linked polyubiquitination of NOD1 and its subsequent proteasomal degradation. The sequence is that of E3 ubiquitin-protein ligase RNF34 from Mus musculus (Mouse).